The chain runs to 368 residues: Transcription factor bHLH30 (368 aa).

Residues 3-30 (AKKEEEEEEEEDSSEAMNNIQNYQNDLF) adopt a coiled-coil conformation. The bHLH domain occupies 173–222 (AASKSHSEAERRRRERINNHLAKLRSILPNTTKTDKASLLAEVIQHVKEL). Residues 333–368 (KSNVEESSSSGNAKRQRMSSHNTITIVEQQQQYNQR) form a disordered region. Residues 337–368 (EESSSSGNAKRQRMSSHNTITIVEQQQQYNQR) are compositionally biased toward polar residues.

As to quaternary structure, homodimer. Interacts with LHW.

It is found in the nucleus. The sequence is that of Transcription factor bHLH30 (BHLH30) from Arabidopsis thaliana (Mouse-ear cress).